The following is an 879-amino-acid chain: Probable phospholipid transport protein YdbH (879 aa).

The Cytoplasmic segment spans residues 1 to 6 (MLGKYK). The helical transmembrane segment at 7–29 (AVLALLLLIILVPLTLLMTLGLW) threads the bilayer. Residues 30 to 879 (VPTLAGIWLP…PQGKECEEKQ (850 aa)) lie on the Periplasmic side of the membrane.

In terms of assembly, interacts with the outer membrane lipoprotein YnbE.

The protein resides in the cell inner membrane. Functionally, involved in outer membrane lipid homeostasis. Interacts with the outer membrane lipoprotein YnbE to form a functional protein bridge connecting the inner and outer membranes of the cell. Likely transports phospholipids between the inner membrane and the outer membrane. It would provide a bridge-like structure that protects phospholipids as they travel across the periplasm. Its function is as follows. TamB, YdbH and YhdP are redundant, but not equivalent, in performing an essential function for growth and maintaining lipid homeostasis in the outer membrane. Any of these three proteins is sufficient for growth. The sequence is that of Probable phospholipid transport protein YdbH (ydbH) from Escherichia coli (strain K12).